The chain runs to 448 residues: Tubulin alpha-2 chain (448 aa).

Positions 11, 69, 138, 142, 143, 177, 204, and 226 each coordinate GTP. E69 provides a ligand contact to Mg(2+). E252 is an active-site residue. The segment at 428–448 is disordered; sequence KDYEEVGADSNEGGEEEGEEY. Acidic residues predominate over residues 429 to 448; the sequence is DYEEVGADSNEGGEEEGEEY.

The protein belongs to the tubulin family. As to quaternary structure, dimer of alpha and beta chains. A typical microtubule is a hollow water-filled tube with an outer diameter of 25 nm and an inner diameter of 15 nM. Alpha-beta heterodimers associate head-to-tail to form protofilaments running lengthwise along the microtubule wall with the beta-tubulin subunit facing the microtubule plus end conferring a structural polarity. Microtubules usually have 13 protofilaments but different protofilament numbers can be found in some organisms and specialized cells. It depends on Mg(2+) as a cofactor. Post-translationally, undergoes a tyrosination/detyrosination cycle, the cyclic removal and re-addition of a C-terminal tyrosine residue. In terms of tissue distribution, expressed in intestine, pharyngeal muscle cells, and a subset of neurons.

The protein localises to the cytoplasm. It is found in the cytoskeleton. It carries out the reaction GTP + H2O = GDP + phosphate + H(+). Its function is as follows. Tubulin is the major constituent of microtubules, a cylinder consisting of laterally associated linear protofilaments composed of alpha- and beta-tubulin heterodimers. Microtubules grow by the addition of GTP-tubulin dimers to the microtubule end, where a stabilizing cap forms. Below the cap, tubulin dimers are in GDP-bound state, owing to GTPase activity of alpha-tubulin. Required for the normal dynamic behavior of the non-centrosomal microtubules in the epidermal syncytium. Involved in the redistribution of microtubule end-binding protein EB1/ebp-2 caused by wounding. Required to modulate expression in the epidermis of antimicrobial peptides, such as nlp-29, after wounding, or fungal infection. This is Tubulin alpha-2 chain (tba-2) from Caenorhabditis elegans.